The sequence spans 440 residues: Cysteine proteinase (440 aa).

Positions methionine 1–valine 60 are cleaved as a signal peptide. A propeptide spans valine 61–threonine 229 (activation peptide). An involved in processing to yield active enzymes region spans residues valine 166–lysine 182. A glycan (N-linked (GlcNAc...) asparagine) is linked at asparagine 206. Cysteine 250 and cysteine 291 form a disulfide bridge. Active-site residues include cysteine 253, histidine 382, and asparagine 404.

The protein belongs to the peptidase C1 family.

This chain is Cysteine proteinase, found in Theileria parva (East coast fever infection agent).